Here is a 119-residue protein sequence, read N- to C-terminus: FAD-linked sulfhydryl oxidase (119 aa).

The ERV/ALR sulfhydryl oxidase domain maps to 1 to 97 (MLHWGPKFWR…ISWSEYKNIY (97 aa)). An intrachain disulfide couples C44 to C47.

Belongs to the asfivirus B119L family. Interacts with A151R. Requires FAD as cofactor.

The protein localises to the host cytoplasm. It localises to the virion. The enzyme catalyses 2 R'C(R)SH + O2 = R'C(R)S-S(R)CR' + H2O2. FAD-dependent sulfhydryl oxidase that catalyzes the formation of disulfide bonds in viral proteins produced in the cell cytoplasm. Involved in virion maturation. This chain is FAD-linked sulfhydryl oxidase, found in Ornithodoros (relapsing fever ticks).